The chain runs to 357 residues: Histidine biosynthesis bifunctional protein HisB (357 aa).

The tract at residues 1 to 168 (MTPILFIDRD…GIAHALADAP (168 aa)) is histidinol-phosphatase. Residue Asp-8 is the Nucleophile of the active site. 3 residues coordinate Mg(2+): Asp-8, Asp-10, and Asp-128. Residue Asp-10 is the Proton donor of the active site. The segment at 169–357 (RTAVVQRDTK…TALPSTKGAL (189 aa)) is imidazoleglycerol-phosphate dehydratase.

The protein in the N-terminal section; belongs to the histidinol-phosphatase family. It in the C-terminal section; belongs to the imidazoleglycerol-phosphate dehydratase family. The cofactor is Mg(2+).

It is found in the cytoplasm. The catalysed reaction is D-erythro-1-(imidazol-4-yl)glycerol 3-phosphate = 3-(imidazol-4-yl)-2-oxopropyl phosphate + H2O. It carries out the reaction L-histidinol phosphate + H2O = L-histidinol + phosphate. Its pathway is amino-acid biosynthesis; L-histidine biosynthesis; L-histidine from 5-phospho-alpha-D-ribose 1-diphosphate: step 6/9. The protein operates within amino-acid biosynthesis; L-histidine biosynthesis; L-histidine from 5-phospho-alpha-D-ribose 1-diphosphate: step 8/9. This is Histidine biosynthesis bifunctional protein HisB from Stenotrophomonas maltophilia (strain K279a).